The sequence spans 389 residues: Phospho-N-acetylmuramoyl-pentapeptide-transferase (389 aa).

Transmembrane regions (helical) follow at residues 25-45 (RAVMASLTALVIGLGFGPFVI), 74-94 (MGGVLVLIGIAVSTLLWADWG), 97-117 (FIWIVLLVTLGYGAIGWVDDY), 134-154 (FFWQTVIGLFAAAYLAFSVSE), 190-210 (ISYPLGVFGFIILTYLVIVGS), 222-242 (GLVIMPVVLVGSALGVFAYVM), 259-279 (AGELLIFCSAMAGAGLAFLWF), 286-306 (VFMGDVGALALGGALGTIAVI), 311-331 (IVLFIMGGIFVAETVSVMLQV), and 366-386 (QVVVRFWVITMMLVLIGLSTL).

The protein belongs to the glycosyltransferase 4 family. MraY subfamily. Mg(2+) serves as cofactor.

The protein resides in the cell inner membrane. The catalysed reaction is UDP-N-acetyl-alpha-D-muramoyl-L-alanyl-gamma-D-glutamyl-meso-2,6-diaminopimeloyl-D-alanyl-D-alanine + di-trans,octa-cis-undecaprenyl phosphate = di-trans,octa-cis-undecaprenyl diphospho-N-acetyl-alpha-D-muramoyl-L-alanyl-D-glutamyl-meso-2,6-diaminopimeloyl-D-alanyl-D-alanine + UMP. It participates in cell wall biogenesis; peptidoglycan biosynthesis. Functionally, catalyzes the initial step of the lipid cycle reactions in the biosynthesis of the cell wall peptidoglycan: transfers peptidoglycan precursor phospho-MurNAc-pentapeptide from UDP-MurNAc-pentapeptide onto the lipid carrier undecaprenyl phosphate, yielding undecaprenyl-pyrophosphoryl-MurNAc-pentapeptide, known as lipid I. This chain is Phospho-N-acetylmuramoyl-pentapeptide-transferase, found in Ralstonia pickettii (strain 12J).